Reading from the N-terminus, the 82-residue chain is U-actitoxin-Avd3p (82 aa).

The signal sequence occupies residues 1–16; it reads MVFLLCFFLVADVSYG. Residues 21–71 form the BPTI/Kunitz inhibitor domain; that stretch reads CELPKVVGPCRASHPRYYYNSSSKRCEKFNYGGCRGNANNFHTLEECEKVC. 3 disulfides stabilise this stretch: cysteine 21/cysteine 71, cysteine 30/cysteine 54, and cysteine 46/cysteine 67. The propeptide occupies 76–82; sequence RDSPKEN.

The protein belongs to the venom Kunitz-type family. Sea anemone type 2 potassium channel toxin subfamily.

Its subcellular location is the secreted. It localises to the nematocyst. Functionally, serine protease inhibitor that inhibits both tissue and plasma kallikreins. Has hemolytic activity. Inhibits voltage-gated potassium channels (Kv). This Anemonia viridis (Snakelocks anemone) protein is U-actitoxin-Avd3p.